We begin with the raw amino-acid sequence, 466 residues long: Ceramide glucosyltransferase 1 (466 aa).

The chain crosses the membrane as a helical span at residues 70–90 (LALSGCIFVSVLYLVHIIAFF). Position 148 (D148) is a short sequence motif, D1. Residue D200 is a short sequence motif, D2. Position 294 (D294) is a short sequence motif, D3. The Proton acceptor role is filled by D294. The (Q/R)XXRW motif lies at 330-334 (RIGRW). The next 2 helical transmembrane spans lie at 354–374 (CVTS…YSVY) and 403–423 (TPFL…FIFI).

Belongs to the glycosyltransferase 2 family. Expressed in excretory canals, pharyngeal intestinal valve, intestine and intestinal rectal valve.

Its subcellular location is the membrane. The catalysed reaction is an N-acylsphing-4-enine + UDP-alpha-D-glucose = a beta-D-glucosyl-(1&lt;-&gt;1')-N-acylsphing-4-enine + UDP + H(+). It carries out the reaction an N-acyl-15-methylhexadecasphing-4-enine + UDP-alpha-D-glucose = an N-acyl-1-beta-D-glucosyl-15-methylhexadecasphing-4-enine + UDP + H(+). It participates in lipid metabolism; sphingolipid metabolism. In terms of biological role, catalyzes the first glycosylation step in glycosphingolipid biosynthesis, the transfer of glucose to ceramide to produce glucosylceramides (GlcCer). GlcCer are known to contribute to the physical properties and physiological functions of membranes and may regulate signal transduction. Only branched-chain sphingoid bases like 15-methylhexadecasphing-4-enine are used for generating complex sphingolipids in Caenorhabditis elegans. Together with cgt-3, plays a role in the trafficking of proteins such as mig-14 to the cell membrane in intestinal cells. The chain is Ceramide glucosyltransferase 1 from Caenorhabditis elegans.